The following is a 78-amino-acid chain: Large ribosomal subunit protein eL20 (78 aa).

The protein belongs to the eukaryotic ribosomal protein eL20 family. In terms of assembly, part of the 50S ribosomal subunit. Binds 23S rRNA.

The chain is Large ribosomal subunit protein eL20 from Thermococcus sibiricus (strain DSM 12597 / MM 739).